Consider the following 202-residue polypeptide: Proteasome subunit beta 1 (202 aa).

Position 1 (Met-1) is a propeptide, removed in mature form; by autocatalysis. Thr-2 functions as the Nucleophile in the catalytic mechanism.

This sequence belongs to the peptidase T1B family. The 20S proteasome core is composed of 14 alpha and 14 beta subunits that assemble into four stacked heptameric rings, resulting in a barrel-shaped structure. The two inner rings, each composed of seven catalytic beta subunits, are sandwiched by two outer rings, each composed of seven alpha subunits. The catalytic chamber with the active sites is on the inside of the barrel. Has a gated structure, the ends of the cylinder being occluded by the N-termini of the alpha-subunits. Is capped at one or both ends by the proteasome regulatory ATPase, PAN.

Its subcellular location is the cytoplasm. It carries out the reaction Cleavage of peptide bonds with very broad specificity.. Its activity is regulated as follows. The formation of the proteasomal ATPase PAN-20S proteasome complex, via the docking of the C-termini of PAN into the intersubunit pockets in the alpha-rings, triggers opening of the gate for substrate entry. Interconversion between the open-gate and close-gate conformations leads to a dynamic regulation of the 20S proteasome proteolysis activity. Its function is as follows. Component of the proteasome core, a large protease complex with broad specificity involved in protein degradation. This chain is Proteasome subunit beta 1, found in Pyrobaculum aerophilum (strain ATCC 51768 / DSM 7523 / JCM 9630 / CIP 104966 / NBRC 100827 / IM2).